The following is a 101-amino-acid chain: NAD(P)H-quinone oxidoreductase subunit 4L, chloroplastic (101 aa).

The next 3 membrane-spanning stretches (helical) occupy residues 2 to 22, 32 to 52, and 61 to 81; these read ILEH…YGLI, MCLE…SDFF, and IFSI…PAIL.

This sequence belongs to the complex I subunit 4L family. NDH is composed of at least 16 different subunits, 5 of which are encoded in the nucleus.

Its subcellular location is the plastid. It localises to the chloroplast thylakoid membrane. The catalysed reaction is a plastoquinone + NADH + (n+1) H(+)(in) = a plastoquinol + NAD(+) + n H(+)(out). It carries out the reaction a plastoquinone + NADPH + (n+1) H(+)(in) = a plastoquinol + NADP(+) + n H(+)(out). Its function is as follows. NDH shuttles electrons from NAD(P)H:plastoquinone, via FMN and iron-sulfur (Fe-S) centers, to quinones in the photosynthetic chain and possibly in a chloroplast respiratory chain. The immediate electron acceptor for the enzyme in this species is believed to be plastoquinone. Couples the redox reaction to proton translocation, and thus conserves the redox energy in a proton gradient. The chain is NAD(P)H-quinone oxidoreductase subunit 4L, chloroplastic from Platanus occidentalis (Sycamore).